The sequence spans 138 residues: Small ribosomal subunit protein uS12 (138 aa).

Asp89 carries the post-translational modification 3-methylthioaspartic acid. The tract at residues Val107–Lys138 is disordered.

The protein belongs to the universal ribosomal protein uS12 family. As to quaternary structure, part of the 30S ribosomal subunit. Contacts proteins S8 and S17. May interact with IF1 in the 30S initiation complex.

In terms of biological role, with S4 and S5 plays an important role in translational accuracy. Functionally, interacts with and stabilizes bases of the 16S rRNA that are involved in tRNA selection in the A site and with the mRNA backbone. Located at the interface of the 30S and 50S subunits, it traverses the body of the 30S subunit contacting proteins on the other side and probably holding the rRNA structure together. The combined cluster of proteins S8, S12 and S17 appears to hold together the shoulder and platform of the 30S subunit. The chain is Small ribosomal subunit protein uS12 from Azobacteroides pseudotrichonymphae genomovar. CFP2.